The chain runs to 395 residues: Nucleoside diphosphate kinase homolog 7 (395 aa).

One can recognise a DM10 domain in the interval 22–110 (QSERFAFIAE…YTARQLGSRK (89 aa)).

Belongs to the NDK family. As to quaternary structure, component of sperm flagellar doublet microtubules. Component of the gamma-tubulin ring complex.

The protein localises to the cytoplasm. It localises to the cytoskeleton. Its subcellular location is the microtubule organizing center. It is found in the centrosome. The protein resides in the nucleus. The protein localises to the spindle. It localises to the cilium axoneme. Its subcellular location is the flagellum axoneme. It is found in the cell projection. The protein resides in the cilium. Functionally, possesses an intrinsic kinase activity. Displays 3'-5' exonuclease activity with a preference for single-stranded DNA. Does not seem to have nucleoside diphosphate kinase activity. Functional component of the gamma-tubulin ring complex, implicated in the regulation of the microtubule-nucleating activity of the gamma-tubulin ring complex in centrosomes, in a kinase activity-dependent manner. Part of the dynein-decorated doublet microtubules (DMTs) in cilia axoneme, which is required for motile cilia beating. The sequence is that of Nucleoside diphosphate kinase homolog 7 from Mus musculus (Mouse).